A 407-amino-acid chain; its full sequence is MTVRGAALAPDPASPTTTTASPSVSATPEGSPTAMEHPVFLMTTAAQAISGFFVWTALLITCHQIYMHLRCYSRPNEQRHIVRILFIVPIYAFDSWLSLLFFTNDQYYVYFGTVRDCYEAFVIYNFLSLCYEYLGGESAIMSEIRGKAIESSCMYGTCCLWGKTYSIGFLRFCKQATLQFCVVKPLMAVSTVILQAFGKYRDGDFDVTSGYLYVTIIYNISVSLALYALFLFYFATRELLSPYSPVLKFFMVKSVIFLSFWQGMLLAILEKCGAIPKINSARVSVGEGTVAAGYQDFIICVEMFFAALALRHAFTYKVYADKRLDAQGRCAPMKSISSSLKETMNPHDIVQDAIHNFSPAYQQYTQQSTLEPGPTWRGGTHSLSRSHSLSGARDNEKTLLLSSDDEF.

The segment covering 1–28 (MTVRGAALAPDPASPTTTTASPSVSATP) has biased composition (low complexity). Residues 1–31 (MTVRGAALAPDPASPTTTTASPSVSATPEGS) form a disordered region. 7 consecutive transmembrane segments (helical) span residues 40 to 60 (FLMTTAAQAISGFFVWTALLI), 84 to 104 (ILFIVPIYAFDSWLSLLFFTN), 121 to 141 (FVIYNFLSLCYEYLGGESAIM), 178 to 198 (LQFCVVKPLMAVSTVILQAFG), 214 to 234 (VTIIYNISVSLALYALFLFYF), 249 to 269 (FFMVKSVIFLSFWQGMLLAIL), and 290 to 310 (VAAGYQDFIICVEMFFAALAL). Residues 369–395 (TLEPGPTWRGGTHSLSRSHSLSGARDN) form a disordered region. Phosphoserine occurs at positions 388, 402, and 403.

This sequence belongs to the TMEM184 family.

Its subcellular location is the membrane. May activate the MAP kinase signaling pathway. The polypeptide is Transmembrane protein 184B (Tmem184b) (Mus musculus (Mouse)).